We begin with the raw amino-acid sequence, 651 residues long: Probable potassium transport system protein Kup (651 aa).

Transmembrane regions (helical) follow at residues 41 to 61 (LVLGALGVVYGDIGTSPIYAF), 82 to 102 (VVSLIFWALTLVVTIKYVLFV), 130 to 150 (LILGVGICGAALFFGDAVITP), 163 to 183 (IVAPDLTPFVVPITVVILVTL), 194 to 214 (VAIVFGPIMALWFLALGASGL), 235 to 255 (FLMISPGIAFITVGAVFLAMT), 276 to 296 (WLWIVFPCLLLNYFGQAAFIL), 309 to 329 (MMPSFALLPMVLLATAATVIA), 366 to 386 (IYIPRVNLLLGLAVVILVLGF), 395 to 415 (AYGIAVTGNMLVTTVLLYIVM), 426 to 446 (ALPIIVGFLIIDIMFFGANII), and 450 to 470 (EGGWASIGIAAILVLIMWTWV).

This sequence belongs to the HAK/KUP transporter (TC 2.A.72) family.

The protein resides in the cell inner membrane. It catalyses the reaction K(+)(in) + H(+)(in) = K(+)(out) + H(+)(out). In terms of biological role, transport of potassium into the cell. Likely operates as a K(+):H(+) symporter. The protein is Probable potassium transport system protein Kup of Brucella anthropi (strain ATCC 49188 / DSM 6882 / CCUG 24695 / JCM 21032 / LMG 3331 / NBRC 15819 / NCTC 12168 / Alc 37) (Ochrobactrum anthropi).